Consider the following 653-residue polypeptide: ATP-dependent zinc metalloprotease FtsH 1 (653 aa).

The Cytoplasmic segment spans residues 1–7 (MSRFFKS). Residues 8–28 (AAFPILIVVVLAFFAQRLINP) traverse the membrane as a helical segment. Topologically, residues 29–105 (GDSGPRYDYS…FDIEGTKSNG (77 aa)) are extracellular. A helical transmembrane segment spans residues 106-126 (WLSLLTYVLPFLIFIGFWIFL). Residues 127–653 (MNQVQGGGSK…MHFPERPELA (527 aa)) lie on the Cytoplasmic side of the membrane. Residue 198–205 (GPPGTGKT) coordinates ATP. His-420 serves as a coordination point for Zn(2+). The active site involves Glu-421. Residues His-424 and Asp-496 each contribute to the Zn(2+) site. A disordered region spans residues 603–653 (EEVFGAEASPPPDVPLPPATERGRDTPRPLPRPGLAGGAAEMHFPERPELA). Residues 611–620 (SPPPDVPLPP) are compositionally biased toward pro residues.

The protein in the central section; belongs to the AAA ATPase family. In the C-terminal section; belongs to the peptidase M41 family. Homohexamer. Zn(2+) serves as cofactor.

The protein localises to the cell membrane. Functionally, acts as a processive, ATP-dependent zinc metallopeptidase for both cytoplasmic and membrane proteins. Plays a role in the quality control of integral membrane proteins. This chain is ATP-dependent zinc metalloprotease FtsH 1, found in Conexibacter woesei (strain DSM 14684 / CCUG 47730 / CIP 108061 / JCM 11494 / NBRC 100937 / ID131577).